We begin with the raw amino-acid sequence, 1331 residues long: Sodium-dependent transporter bedraggled (1331 aa).

A disordered region spans residues 1 to 62; that stretch reads MSSKEQQAAG…QLEHEQFGLS (62 aa). The span at 16-25 shows a compositional bias: polar residues; it reads NSNAYSSLPP. Residues 28–43 are compositionally biased toward gly residues; sequence TGAGCSGAALGSGTGT. A glycan (N-linked (GlcNAc...) asparagine) is linked at Asn-168. Disordered regions lie at residues 221–284 and 363–473; these read EPRT…TEPV and QTNA…SASS. Residues 258-282 show a composition bias toward polar residues; that stretch reads KTFSCSLRPTSQIASSSGSLETSTE. The span at 369-383 shows a compositional bias: basic and acidic residues; sequence SSEEPRPRQYGRRLE. The segment covering 413–436 has biased composition (polar residues); sequence LQDTPTHPIMSTCSELSSARSSRM. Low complexity predominate over residues 437 to 453; it reads PSPVSLPSDSSSSGSSS. Polar residues predominate over residues 463–473; the sequence is VQTTTMCSASS. The next 3 helical transmembrane spans lie at 505 to 525, 531 to 551, and 567 to 587; these read LALIGCTLGVFNMCRFAVLTI, FLLQFLLLSVIFGIPLLWLQM, and ISPICAGVGIALVMQQCFLAL. Residues Asn-627 and Asn-631 are each glycosylated (N-linked (GlcNAc...) asparagine). A run of 4 helical transmembrane segments spans residues 667 to 687, 696 to 716, 741 to 761, and 778 to 798; these read QLAFYLALIWAAVFLILCKGL, IIYTLPLVALAVVTAKFVYVV, TAATQETFLTWGLLGASVIAI, and AILLVLFTLIGLGLMALLALC. A glycan (N-linked (GlcNAc...) asparagine) is linked at Asn-857. A helical transmembrane segment spans residues 890–910; that stretch reads WVWAAVAFATFAGFGLAQLCV. Asn-921 carries an N-linked (GlcNAc...) asparagine glycan. Helical transmembrane passes span 926-946, 956-976, 998-1018, and 1044-1064; these read VLLSCVTGLLLSIPFATEMGI, LGGSWFIPIIWTAQIFGVFLI, AFLALSWNVLLPIGLITLSVV, and MGSLIQIGVLLVIPVTAIIQI. 3 disordered regions span residues 1086–1136, 1169–1238, and 1256–1275; these read PEEG…SYTT, SLDA…ASTL, and VRHRQSQGGGNLVTASTLPR. Polar residues-rich tracts occupy residues 1097–1115 and 1186–1196; these read ARQTASQSRRNALGQTTEG and ILTNPAGSSFN. Over residues 1197 to 1209 the composition is skewed to low complexity; that stretch reads ADPSPASSSSPES.

Belongs to the sodium:neurotransmitter symporter (SNF) (TC 2.A.22) family.

It is found in the membrane. Functionally, putative sodium-dependent transporter which is required for viability, early imaginal disk development and adult motor coordination. Also has a role in the fate commitment of the R3/R4 photoreceptor cells. May function in ommatidial polarity by regulating the activity of the core polarity genes, acting upstream of (or in parallel to) Vang, dsh, pk, stan, and dgo, but downstream or independently of fz. This is Sodium-dependent transporter bedraggled from Drosophila melanogaster (Fruit fly).